The sequence spans 52 residues: MRIKVGLKCEECGDINYSTYKNSKNTTEKLELKKYCPRLKKHTFHKEVKLKS.

Belongs to the bacterial ribosomal protein bL33 family.

This is Large ribosomal subunit protein bL33 from Campylobacter jejuni subsp. doylei (strain ATCC BAA-1458 / RM4099 / 269.97).